Here is a 448-residue protein sequence, read N- to C-terminus: 5-hydroxytryptamine receptor 7 (448 aa).

Topologically, residues 1–86 are extracellular; sequence MMDVNSSGRP…INYGRVEKVV (86 aa). Residues asparagine 5 and asparagine 69 are each glycosylated (N-linked (GlcNAc...) asparagine). A helical membrane pass occupies residues 87–111; it reads IGSILTLITLLTIAGNCLVVISVCF. Residues 112-121 are Cytoplasmic-facing; it reads VKKLRQPSNY. The helical transmembrane segment at 122–143 threads the bilayer; it reads LIVSLALADLSVAVAVMPFVSV. At 144–155 the chain is on the extracellular side; sequence TDLIGGKWIFGH. A helical transmembrane segment spans residues 156 to 181; the sequence is FFCNVFIAMDVMCCTASIMTLCVISI. Cysteine 158 and cysteine 234 are disulfide-bonded. Aspartate 165 provides a ligand contact to serotonin. Residues 182-201 are Cytoplasmic-facing; the sequence is DRYLGITRPLTYPVRQNGKC. The chain crosses the membrane as a helical span at residues 202–222; that stretch reads MAKMILSVWLLSASITLPPLF. Residues 223–240 lie on the Extracellular side of the membrane; sequence GWAQNVNDDKVCLISQDF. A helical transmembrane segment spans residues 241-263; it reads GYTIYSTAVAFYIPMSVMLFMYY. Residues 264–329 lie on the Cytoplasmic side of the membrane; that stretch reads QIYKAARKSA…SIFKREQKAA (66 aa). A helical transmembrane segment spans residues 330–355; the sequence is TTLGIIVGAFTVCWLPFFLLSTARPF. Topologically, residues 356–366 are extracellular; that stretch reads ICGTSCSCIPL. The chain crosses the membrane as a helical span at residues 367-390; the sequence is WVERTCLWLGYANSLINPFIYAFF. Topologically, residues 391–448 are cytoplasmic; sequence NRDLRTTYRSLLQCQYRNINRKLSAAGMHEALKLAERPERSEFVLQNCDHCGKKGHDT. Cysteine 404 is lipidated: S-palmitoyl cysteine.

This sequence belongs to the G-protein coupled receptor 1 family.

It is found in the cell membrane. G-protein coupled receptor for 5-hydroxytryptamine (serotonin), a biogenic hormone that functions as a neurotransmitter, a hormone and a mitogen. Ligand binding causes a conformation change that triggers signaling via guanine nucleotide-binding proteins (G proteins) and modulates the activity of downstream effectors. HTR7 is coupled to G(s) G alpha proteins and mediates activation of adenylate cyclase activity. The sequence is that of 5-hydroxytryptamine receptor 7 (Htr7) from Mus musculus (Mouse).